The sequence spans 417 residues: Calreticulin (417 aa).

The signal sequence occupies residues 1 to 17; the sequence is MLLPVPLLLGLLGLAAA. Residues 18-197 are N-domain; sequence DPTVYFKEQF…NSQVESGSLE (180 aa). Gln26 contributes to the Ca(2+) binding site. Position 48 is an N6-acetyllysine (Lys48). 2 residues coordinate Ca(2+): Lys62 and Lys64. Position 64 is an N6-(2-hydroxyisobutyryl)lysine (Lys64). An alpha-D-glucoside is bound by residues Tyr109, Lys111, Tyr128, and Asp135. Cys137 and Cys163 are joined by a disulfide. Lys159 carries the post-translational modification N6-acetyllysine. Asn179 is a glycosylation site (N-linked (GlcNAc...) asparagine). A 1-1 repeat occupies 191–202; the sequence is VESGSLEDDWDF. The segment at 191 to 255 is 4 X approximate repeats; that stretch reads VESGSLEDDW…DAKKPEDWDE (65 aa). The disordered stretch occupies residues 193–270; that stretch reads SGSLEDDWDF…WEPPVIQNPE (78 aa). Residues 198–308 are P-domain; it reads DDWDFLPPKK…YSPDSNIYAY (111 aa). A compositionally biased stretch (basic and acidic residues) spans 207 to 251; sequence KIKDPDAAKPEDWDDRAKIDDPTDSKPEDWDKPEHIPDPDAKKPE. The residue at position 209 (Lys209) is an N6-acetyllysine. 6 tandem repeats follow at residues 210–221, 227–238, 244–255, 259–269, 273–283, and 287–297. Residues 237–270 are interaction with PPIB; it reads DKPEHIPDPDAKKPEDWDEEMDGEWEPPVIQNPE. Positions 252 to 261 are enriched in acidic residues; sequence DWDEEMDGEW. The 3 X approximate repeats stretch occupies residues 259-297; that stretch reads GEWEPPVIQNPEYKGEWKPRQIDNPEYKGIWIHPEIDNP. The segment at 309–417 is C-domain; sequence ENFAVLGLDL…AAAGQAKDEL (109 aa). Asp317 serves as a coordination point for an alpha-D-glucoside. A Ca(2+)-binding site is contributed by Asp328. Residues 350–417 form a disordered region; it reads TKAAEKQMKD…AAAGQAKDEL (68 aa). A compositionally biased stretch (basic and acidic residues) spans 352-378; that stretch reads AAEKQMKDKQDEEQRLHEEEEEKKGKE. Residues 379–408 show a composition bias toward acidic residues; that stretch reads EEEADKDDDEDKDEDEEDEDEKEEEEEEDA. A Prevents secretion from ER motif is present at residues 414 to 417; the sequence is KDEL.

This sequence belongs to the calreticulin family. Monomer. Component of an EIF2 complex at least composed of CELF1/CUGBP1, CALR, CALR3, EIF2S1, EIF2S2, HSP90B1 and HSPA5. Interacts with PDIA3/ERp57 and SPACA9. Interacts with TRIM21. Interacts with NR3C1. Interacts with PPIB. Interacts (via P-domain) with PDIA5. Interacts with GABARAP. Interacts with CLCC1.

It localises to the endoplasmic reticulum lumen. It is found in the cytoplasm. The protein resides in the cytosol. The protein localises to the secreted. Its subcellular location is the extracellular space. It localises to the extracellular matrix. It is found in the cell surface. The protein resides in the sarcoplasmic reticulum lumen. The protein localises to the cytoplasmic vesicle. Its subcellular location is the secretory vesicle. It localises to the cortical granule. It is found in the cytolytic granule. Functionally, calcium-binding chaperone that promotes folding, oligomeric assembly and quality control in the endoplasmic reticulum (ER) via the calreticulin/calnexin cycle. This lectin interacts transiently with almost all of the monoglucosylated glycoproteins that are synthesized in the ER. Interacts with the DNA-binding domain of NR3C1 and mediates its nuclear export. Involved in maternal gene expression regulation. May participate in oocyte maturation via the regulation of calcium homeostasis. Present in the cortical granules of non-activated oocytes, is exocytosed during the cortical reaction in response to oocyte activation and might participate in the block to polyspermy. In Bos taurus (Bovine), this protein is Calreticulin (CALR).